We begin with the raw amino-acid sequence, 249 residues long: Triosephosphate isomerase (249 aa).

Substrate is bound by residues Asn10 and Lys12. The Electrophile role is filled by His94. Catalysis depends on Glu166, which acts as the Proton acceptor.

It belongs to the triosephosphate isomerase family. In terms of assembly, homodimer.

The catalysed reaction is D-glyceraldehyde 3-phosphate = dihydroxyacetone phosphate. The protein operates within carbohydrate biosynthesis; gluconeogenesis. Its pathway is carbohydrate degradation; glycolysis; D-glyceraldehyde 3-phosphate from glycerone phosphate: step 1/1. The polypeptide is Triosephosphate isomerase (tpiA) (Emericella nidulans (strain FGSC A4 / ATCC 38163 / CBS 112.46 / NRRL 194 / M139) (Aspergillus nidulans)).